Reading from the N-terminus, the 500-residue chain is UDP-N-acetylmuramoyl-L-alanyl-D-glutamate--2,6-diaminopimelate ligase (500 aa).

UDP-N-acetyl-alpha-D-muramoyl-L-alanyl-D-glutamate is bound at residue S32. 117–123 (GTNGKTT) contributes to the ATP binding site. UDP-N-acetyl-alpha-D-muramoyl-L-alanyl-D-glutamate contacts are provided by residues 159–160 (TT), S186, Q192, and R194. An N6-carboxylysine modification is found at K226. Meso-2,6-diaminopimelate contacts are provided by residues R395, 419–422 (DNPR), G470, and E474. Residues 419-422 (DNPR) carry the Meso-diaminopimelate recognition motif motif.

This sequence belongs to the MurCDEF family. MurE subfamily. Mg(2+) serves as cofactor. Carboxylation is probably crucial for Mg(2+) binding and, consequently, for the gamma-phosphate positioning of ATP.

It is found in the cytoplasm. It carries out the reaction UDP-N-acetyl-alpha-D-muramoyl-L-alanyl-D-glutamate + meso-2,6-diaminopimelate + ATP = UDP-N-acetyl-alpha-D-muramoyl-L-alanyl-gamma-D-glutamyl-meso-2,6-diaminopimelate + ADP + phosphate + H(+). The protein operates within cell wall biogenesis; peptidoglycan biosynthesis. Its function is as follows. Catalyzes the addition of meso-diaminopimelic acid to the nucleotide precursor UDP-N-acetylmuramoyl-L-alanyl-D-glutamate (UMAG) in the biosynthesis of bacterial cell-wall peptidoglycan. The protein is UDP-N-acetylmuramoyl-L-alanyl-D-glutamate--2,6-diaminopimelate ligase of Parasynechococcus marenigrum (strain WH8102).